Here is a 169-residue protein sequence, read N- to C-terminus: Nascent polypeptide-associated complex subunit alpha (169 aa).

An NAC-A/B domain is found at 14 to 78 (NKNEKKAREM…AKIDNFSQKL (65 aa)). The segment at 85–128 (IQSVSKSPEEIQKDMQLAADQAGDESAKPAAAAEEDDEAPVDAG) is disordered. The 40-residue stretch at 130-169 (LSAEDIELVASQANVSKNKAIKALKEHNGDIVNAIMALSK) folds into the UBA domain.

This sequence belongs to the NAC-alpha family. Part of the nascent polypeptide-associated complex (NAC), consisting of EGD2 and EGD1. NAC associates with ribosomes via EGD1.

The protein localises to the cytoplasm. The protein resides in the nucleus. In terms of biological role, component of the nascent polypeptide-associated complex (NAC), a dynamic component of the ribosomal exit tunnel, protecting the emerging polypeptides from interaction with other cytoplasmic proteins to ensure appropriate nascent protein targeting. The NAC complex also promotes mitochondrial protein import by enhancing productive ribosome interactions with the outer mitochondrial membrane and blocks the inappropriate interaction of ribosomes translating non-secretory nascent polypeptides with translocation sites in the membrane of the endoplasmic reticulum. EGD2 may also be involved in transcription regulation. The polypeptide is Nascent polypeptide-associated complex subunit alpha (EGD2) (Vanderwaltozyma polyspora (strain ATCC 22028 / DSM 70294 / BCRC 21397 / CBS 2163 / NBRC 10782 / NRRL Y-8283 / UCD 57-17) (Kluyveromyces polysporus)).